The following is a 315-amino-acid chain: Aspartate carbamoyltransferase catalytic subunit (315 aa).

The carbamoyl phosphate site is built by R65 and T66. K93 lines the L-aspartate pocket. Positions 115, 145, and 148 each coordinate carbamoyl phosphate. Residues R179 and R234 each contribute to the L-aspartate site. Residues G275 and P276 each contribute to the carbamoyl phosphate site.

The protein belongs to the aspartate/ornithine carbamoyltransferase superfamily. ATCase family. As to quaternary structure, heterododecamer (2C3:3R2) of six catalytic PyrB chains organized as two trimers (C3), and six regulatory PyrI chains organized as three dimers (R2).

The catalysed reaction is carbamoyl phosphate + L-aspartate = N-carbamoyl-L-aspartate + phosphate + H(+). It participates in pyrimidine metabolism; UMP biosynthesis via de novo pathway; (S)-dihydroorotate from bicarbonate: step 2/3. Functionally, catalyzes the condensation of carbamoyl phosphate and aspartate to form carbamoyl aspartate and inorganic phosphate, the committed step in the de novo pyrimidine nucleotide biosynthesis pathway. In Xanthomonas oryzae pv. oryzae (strain MAFF 311018), this protein is Aspartate carbamoyltransferase catalytic subunit.